We begin with the raw amino-acid sequence, 615 residues long: Mitogen-activated protein kinase 18 (615 aa).

The 292-residue stretch at 25-316 (YRILEVIGKG…PAEALADPYF (292 aa)) folds into the Protein kinase domain. ATP-binding positions include 31–39 (IGKGSYGVV) and Lys-54. Asp-151 (proton acceptor) is an active-site residue. Thr-187 carries the post-translational modification Phosphothreonine. The TXY signature appears at 187–189 (TDY). At Tyr-189 the chain carries Phosphotyrosine. Thr-192 carries the post-translational modification Phosphothreonine. Disordered stretches follow at residues 414–483 (RSTV…ESSV) and 510–544 (NTMTNPENRNIEASSFPPKPQNPVHQFSPTEPPAA). Low complexity predominate over residues 415-426 (STVHSTVVHSTS). Over residues 445–459 (NGASSAGHPSTSAYP) the composition is skewed to polar residues. A compositionally biased stretch (pro residues) spans 464-473 (GPPPRVPPSG). Polar residues-rich tracts occupy residues 510 to 522 (NTMTNPENRNIEA) and 532 to 544 (PVHQFSPTEPPAA).

It belongs to the protein kinase superfamily. CMGC Ser/Thr protein kinase family. MAP kinase subfamily. In terms of assembly, interacts with PHS1. Binds to MAPKKK20. Post-translationally, dually phosphorylated on Thr-187 and Tyr-189, which activates the enzyme. Phosphorylated by MAPKKK20. In terms of tissue distribution, expressed in roots, seedlings, leaves, flower buds, flowers and siliques.

The protein localises to the nucleus. It is found in the cytoplasm. It catalyses the reaction L-seryl-[protein] + ATP = O-phospho-L-seryl-[protein] + ADP + H(+). The enzyme catalyses L-threonyl-[protein] + ATP = O-phospho-L-threonyl-[protein] + ADP + H(+). Its activity is regulated as follows. Activated by threonine and tyrosine phosphorylation. Inactivated by phosphatase PHS1. In terms of biological role, mitogen-activated protein kinase (MAPK) that is specifically regulated by PHS1 and MAPKKK20 and mediates signaling that regulates cortical microtubule functions, maybe through regulation of microtubule dynamic instability. This is Mitogen-activated protein kinase 18 from Arabidopsis thaliana (Mouse-ear cress).